The chain runs to 1209 residues: ATP-dependent helicase/nuclease subunit A (1209 aa).

In terms of domain architecture, UvrD-like helicase ATP-binding spans 9-482 (SQWTDEQWQA…IDLAKNFRSR (474 aa)). 30–37 (AAAGSGKT) contributes to the ATP binding site. The UvrD-like helicase C-terminal domain maps to 510–798 (AALRFGAQDY…RMMTIHKSKG (289 aa)).

Belongs to the helicase family. AddA subfamily. Heterodimer of AddA and AddB/RexB. Mg(2+) is required as a cofactor.

It carries out the reaction Couples ATP hydrolysis with the unwinding of duplex DNA by translocating in the 3'-5' direction.. It catalyses the reaction ATP + H2O = ADP + phosphate + H(+). Its function is as follows. The heterodimer acts as both an ATP-dependent DNA helicase and an ATP-dependent, dual-direction single-stranded exonuclease. Recognizes the chi site generating a DNA molecule suitable for the initiation of homologous recombination. The AddA nuclease domain is required for chi fragment generation; this subunit has the helicase and 3' -&gt; 5' nuclease activities. This is ATP-dependent helicase/nuclease subunit A from Anoxybacillus flavithermus (strain DSM 21510 / WK1).